The chain runs to 157 residues: D-aminoacyl-tRNA deacylase (157 aa).

A Gly-cisPro motif, important for rejection of L-amino acids motif is present at residues 137 to 138; it reads GP.

The protein belongs to the DTD family. Homodimer.

It is found in the cytoplasm. The catalysed reaction is glycyl-tRNA(Ala) + H2O = tRNA(Ala) + glycine + H(+). The enzyme catalyses a D-aminoacyl-tRNA + H2O = a tRNA + a D-alpha-amino acid + H(+). Its function is as follows. An aminoacyl-tRNA editing enzyme that deacylates mischarged D-aminoacyl-tRNAs. Also deacylates mischarged glycyl-tRNA(Ala), protecting cells against glycine mischarging by AlaRS. Acts via tRNA-based rather than protein-based catalysis; rejects L-amino acids rather than detecting D-amino acids in the active site. By recycling D-aminoacyl-tRNA to D-amino acids and free tRNA molecules, this enzyme counteracts the toxicity associated with the formation of D-aminoacyl-tRNA entities in vivo and helps enforce protein L-homochirality. This is D-aminoacyl-tRNA deacylase from Cyanothece sp. (strain PCC 7425 / ATCC 29141).